A 516-amino-acid polypeptide reads, in one-letter code: 2-isopropylmalate synthase (516 aa).

One can recognise a Pyruvate carboxyltransferase domain in the interval 10 to 271; sequence IRIFDTTLRD…TTGIDTRELA (262 aa). Positions 19, 205, 207, and 241 each coordinate Mn(2+). Residues 396-516 are regulatory domain; that stretch reads ELVSFRVEAG…REKASNRETP (121 aa).

It belongs to the alpha-IPM synthase/homocitrate synthase family. LeuA type 1 subfamily. In terms of assembly, homodimer. The cofactor is Mn(2+).

It localises to the cytoplasm. The enzyme catalyses 3-methyl-2-oxobutanoate + acetyl-CoA + H2O = (2S)-2-isopropylmalate + CoA + H(+). It participates in amino-acid biosynthesis; L-leucine biosynthesis; L-leucine from 3-methyl-2-oxobutanoate: step 1/4. Catalyzes the condensation of the acetyl group of acetyl-CoA with 3-methyl-2-oxobutanoate (2-ketoisovalerate) to form 3-carboxy-3-hydroxy-4-methylpentanoate (2-isopropylmalate). The polypeptide is 2-isopropylmalate synthase (Acidimicrobium ferrooxidans (strain DSM 10331 / JCM 15462 / NBRC 103882 / ICP)).